The chain runs to 241 residues: Small ribosomal subunit protein uS2 (241 aa).

This sequence belongs to the universal ribosomal protein uS2 family.

The chain is Small ribosomal subunit protein uS2 from Pectobacterium carotovorum subsp. carotovorum (strain PC1).